Reading from the N-terminus, the 124-residue chain is Large ribosomal subunit protein bL12 (124 aa).

Belongs to the bacterial ribosomal protein bL12 family. Homodimer. Part of the ribosomal stalk of the 50S ribosomal subunit. Forms a multimeric L10(L12)X complex, where L10 forms an elongated spine to which 2 to 4 L12 dimers bind in a sequential fashion. Binds GTP-bound translation factors.

Its function is as follows. Forms part of the ribosomal stalk which helps the ribosome interact with GTP-bound translation factors. Is thus essential for accurate translation. This Cereibacter sphaeroides (strain ATCC 17025 / ATH 2.4.3) (Rhodobacter sphaeroides) protein is Large ribosomal subunit protein bL12.